The sequence spans 116 residues: Large ribosomal subunit protein bL20 (116 aa).

The protein belongs to the bacterial ribosomal protein bL20 family.

Binds directly to 23S ribosomal RNA and is necessary for the in vitro assembly process of the 50S ribosomal subunit. It is not involved in the protein synthesizing functions of that subunit. The chain is Large ribosomal subunit protein bL20 from Synechococcus elongatus (strain ATCC 33912 / PCC 7942 / FACHB-805) (Anacystis nidulans R2).